A 262-amino-acid chain; its full sequence is Putative hydro-lyase Mflv_5194 (262 aa).

The protein belongs to the D-glutamate cyclase family.

This chain is Putative hydro-lyase Mflv_5194, found in Mycolicibacterium gilvum (strain PYR-GCK) (Mycobacterium gilvum (strain PYR-GCK)).